The primary structure comprises 313 residues: Small glutamine-rich tetratricopeptide repeat-containing protein alpha (313 aa).

Residues 69-97 (KELPPDLRSPQETPPSEEDSAEAERLKTE) form a disordered region. Ser77 is modified (phosphoserine). At Thr81 the chain carries Phosphothreonine. Ser84 carries the post-translational modification Phosphoserine. 3 TPR repeats span residues 91-124 (AERL…NPAN), 125-158 (AVYF…DPSY), and 159-192 (SKAY…DPDN). N6-acetyllysine is present on Lys137. The residue at position 301 (Ser301) is a Phosphoserine. Thr303 carries the post-translational modification Phosphothreonine. Ser305 carries the post-translational modification Phosphoserine.

The protein belongs to the SGT family. In terms of assembly, homodimer. Homooligomer. Interacts with DNAJC5 and DNAJC5B. Interacts (via TPR repeats) with HSP90AA1. Interacts (via Gln-rich region) with SLC2A1. Interacts with HSP90AB1. Interacts (via TPR repeats) with HSPA8/Hsc70; the interaction is direct. Interacts with BAG6 (via ubiquitin-like domain); interaction prevents interaction between BAG6 and RNF126. Forms a multiprotein complex, at least composed of DNAJB12, DNAJB14, HSPA8/Hsc70 and SGTA; interaction with DNAJB14 and HSPA8/Hsc70 is direct.

The protein resides in the cytoplasm. The protein localises to the nucleus. Functionally, co-chaperone that binds misfolded and hydrophobic patches-containing client proteins in the cytosol. Mediates their targeting to the endoplasmic reticulum but also regulates their sorting to the proteasome when targeting fails. Functions in tail-anchored/type II transmembrane proteins membrane insertion constituting with ASNA1 and the BAG6 complex a targeting module. Functions upstream of the BAG6 complex and ASNA1, binding more rapidly the transmembrane domain of newly synthesized proteins. It is also involved in the regulation of the endoplasmic reticulum-associated misfolded protein catabolic process via its interaction with BAG6: collaborates with the BAG6 complex to maintain hydrophobic substrates in non-ubiquitinated states. Competes with RNF126 for interaction with BAG6, preventing the ubiquitination of client proteins associated with the BAG6 complex. Binds directly to HSC70 and HSP70 and regulates their ATPase activity. In Bos taurus (Bovine), this protein is Small glutamine-rich tetratricopeptide repeat-containing protein alpha (SGTA).